Consider the following 338-residue polypeptide: UbiA prenyltransferase domain-containing protein 1 (338 aa).

N-acetylalanine is present on alanine 2. 8 consecutive transmembrane segments (helical) span residues 83 to 103 (LLVGCAVAVLAVHGAGNLVNT), 134 to 154 (FGVFLYTLGCVCAACLYYLSP), 160 to 180 (LALIYFGGLSGSFLYTGGIGF), 188 to 208 (LIILITFGPLAVMFAYAIQVG), 209 to 229 (SLAIFPLVYAIPLALSTEAIL), 245 to 267 (IVTLAILIGPTFSYILYNTLLFL), 277 to 297 (THCTISLALPLLTIPMAFSLE), and 315 to 335 (LNLLLGLFYVFGIILAPAGSL).

Belongs to the UbiA prenyltransferase family. In terms of assembly, interacts with HMGCR and SOAT1. Ubiquitously expressed.

The protein localises to the endoplasmic reticulum membrane. Its subcellular location is the golgi apparatus membrane. It localises to the mitochondrion membrane. The protein resides in the cytoplasm. It is found in the nucleus. It catalyses the reaction menadiol + (2E,6E,10E)-geranylgeranyl diphosphate = menaquinol-4 + diphosphate. It carries out the reaction all-trans-decaprenyl diphosphate + 4-hydroxybenzoate = 4-hydroxy-3-(all-trans-decaprenyl)benzoate + diphosphate. It functions in the pathway quinol/quinone metabolism; menaquinone biosynthesis. Its pathway is cofactor biosynthesis; ubiquinone biosynthesis. Functionally, prenyltransferase that mediates the formation of menaquinone-4 (MK-4) and coenzyme Q10. MK-4 is a vitamin K2 isoform present at high concentrations in the brain, kidney and pancreas, and is required for endothelial cell development. Mediates the conversion of phylloquinone (PK) into MK-4, probably by cleaving the side chain of phylloquinone (PK) to release 2-methyl-1,4-naphthoquinone (menadione; K3) and then prenylating it with geranylgeranyl pyrophosphate (GGPP) to form MK-4. Also plays a role in cardiovascular development independently of MK-4 biosynthesis, by acting as a coenzyme Q10 biosynthetic enzyme: coenzyme Q10, also named ubiquinone, plays an important antioxidant role in the cardiovascular system. Mediates biosynthesis of coenzyme Q10 in the Golgi membrane, leading to protect cardiovascular tissues from NOS3/eNOS-dependent oxidative stress. This Homo sapiens (Human) protein is UbiA prenyltransferase domain-containing protein 1.